The chain runs to 87 residues: Large ribosomal subunit protein bL31B (87 aa).

It belongs to the bacterial ribosomal protein bL31 family. Type B subfamily. As to quaternary structure, part of the 50S ribosomal subunit.

The protein is Large ribosomal subunit protein bL31B of Latilactobacillus sakei subsp. sakei (strain 23K) (Lactobacillus sakei subsp. sakei).